A 426-amino-acid polypeptide reads, in one-letter code: Meiotically up-regulated gene 170 protein (426 aa).

The protein belongs to the arrestin family.

The protein resides in the cytoplasm. It localises to the nucleus. Functionally, has a role in meiosis. In Schizosaccharomyces pombe (strain 972 / ATCC 24843) (Fission yeast), this protein is Meiotically up-regulated gene 170 protein (mug170).